The chain runs to 673 residues: UPF0313 protein blr7973 (673 aa).

Residues 332-611 (AWDMIKFSVT…KAFLRYHDPD (280 aa)) enclose the Radical SAM core domain. [4Fe-4S] cluster-binding residues include Cys-346, Cys-350, and Cys-353. Residues 632–673 (RPDQLVPAHQPPGTGKAAGTRRPVRPGGKTQRFTTKGLRVMK) are disordered.

This sequence belongs to the UPF0313 family. [4Fe-4S] cluster serves as cofactor.

This chain is UPF0313 protein blr7973, found in Bradyrhizobium diazoefficiens (strain JCM 10833 / BCRC 13528 / IAM 13628 / NBRC 14792 / USDA 110).